A 101-amino-acid polypeptide reads, in one-letter code: MNLSPRETDKLLVFLAAQVAQRRRERGVKLNHPEAIALISDAVIEAARDGKSVAEAMHIGTTVLTADEVLDEVPDMVSLVQVEATFPDGTKLVSVHDPIRH.

Belongs to the urease gamma subunit family. Heterotrimer of UreA (gamma), UreB (beta) and UreC (alpha) subunits. Three heterotrimers associate to form the active enzyme.

Its subcellular location is the cytoplasm. The enzyme catalyses urea + 2 H2O + H(+) = hydrogencarbonate + 2 NH4(+). The protein operates within nitrogen metabolism; urea degradation; CO(2) and NH(3) from urea (urease route): step 1/1. In Corynebacterium kroppenstedtii (strain DSM 44385 / JCM 11950 / CIP 105744 / CCUG 35717), this protein is Urease subunit gamma.